We begin with the raw amino-acid sequence, 385 residues long: 1-deoxy-D-xylulose 5-phosphate reductoisomerase (385 aa).

Residues Thr-11, Gly-12, Ser-13, Ile-14, Ala-37, Arg-38, Asn-39, and Asn-123 each coordinate NADPH. Residue Lys-124 participates in 1-deoxy-D-xylulose 5-phosphate binding. Glu-125 serves as a coordination point for NADPH. Residue Asp-149 coordinates Mn(2+). Residues Ser-150, Glu-151, Ser-173, and His-196 each contribute to the 1-deoxy-D-xylulose 5-phosphate site. Glu-151 lines the Mn(2+) pocket. Gly-202 is an NADPH binding site. Residues Ser-209, Asn-214, Lys-215, and Glu-218 each coordinate 1-deoxy-D-xylulose 5-phosphate. Glu-218 contributes to the Mn(2+) binding site.

Belongs to the DXR family. It depends on Mg(2+) as a cofactor. Requires Mn(2+) as cofactor.

It catalyses the reaction 2-C-methyl-D-erythritol 4-phosphate + NADP(+) = 1-deoxy-D-xylulose 5-phosphate + NADPH + H(+). It participates in isoprenoid biosynthesis; isopentenyl diphosphate biosynthesis via DXP pathway; isopentenyl diphosphate from 1-deoxy-D-xylulose 5-phosphate: step 1/6. In terms of biological role, catalyzes the NADPH-dependent rearrangement and reduction of 1-deoxy-D-xylulose-5-phosphate (DXP) to 2-C-methyl-D-erythritol 4-phosphate (MEP). The chain is 1-deoxy-D-xylulose 5-phosphate reductoisomerase from Moorella thermoacetica (strain ATCC 39073 / JCM 9320).